The following is a 463-amino-acid chain: Ribosomal protein uS12 methylthiotransferase RimO (463 aa).

Residues 1-26 are disordered; the sequence is MPAMSQNPPLLRPDLAPAPIFDTSRR. Residues 8–19 show a composition bias toward low complexity; it reads PPLLRPDLAPAP. Residues 30 to 140 enclose the MTTase N-terminal domain; it reads PTIGMVSLGC…VLDAVHHAVP (111 aa). Residues cysteine 39, cysteine 75, cysteine 104, cysteine 171, cysteine 175, and cysteine 178 each contribute to the [4Fe-4S] cluster site. Residues 157-395 form the Radical SAM core domain; it reads LTPRHYSYLK…MQKAQAISEA (239 aa). Positions 398 to 463 constitute a TRAM domain; the sequence is AAKVGHRIEV…AGEYDLWGRL (66 aa).

It belongs to the methylthiotransferase family. RimO subfamily. The cofactor is [4Fe-4S] cluster.

The protein resides in the cytoplasm. The catalysed reaction is L-aspartate(89)-[ribosomal protein uS12]-hydrogen + (sulfur carrier)-SH + AH2 + 2 S-adenosyl-L-methionine = 3-methylsulfanyl-L-aspartate(89)-[ribosomal protein uS12]-hydrogen + (sulfur carrier)-H + 5'-deoxyadenosine + L-methionine + A + S-adenosyl-L-homocysteine + 2 H(+). Catalyzes the methylthiolation of an aspartic acid residue of ribosomal protein uS12. In Paracoccus denitrificans (strain Pd 1222), this protein is Ribosomal protein uS12 methylthiotransferase RimO.